The sequence spans 250 residues: DNA repair protein RecO (250 aa).

This sequence belongs to the RecO family.

Functionally, involved in DNA repair and RecF pathway recombination. This chain is DNA repair protein RecO, found in Syntrophomonas wolfei subsp. wolfei (strain DSM 2245B / Goettingen).